Consider the following 461-residue polypeptide: Bifunctional protein GlmU (461 aa).

The tract at residues 1–229 (MNKYVVILAA…FSESLGVNDR (229 aa)) is pyrophosphorylase. UDP-N-acetyl-alpha-D-glucosamine-binding positions include 8–11 (LAAG), lysine 22, glutamine 72, and 77–78 (GT). Position 102 (aspartate 102) interacts with Mg(2+). Positions 139, 154, 169, and 227 each coordinate UDP-N-acetyl-alpha-D-glucosamine. Position 227 (asparagine 227) interacts with Mg(2+). Residues 230–250 (IALAQATKIMQRRINEEHMKN) form a linker region. An N-acetyltransferase region spans residues 251 to 461 (GVSFIDPDTA…LPLSKDKEWE (211 aa)). UDP-N-acetyl-alpha-D-glucosamine-binding residues include arginine 332 and lysine 350. Histidine 362 serves as the catalytic Proton acceptor. UDP-N-acetyl-alpha-D-glucosamine contacts are provided by tyrosine 365 and asparagine 376. Residues 385-386 (NY), alanine 422, and arginine 439 each bind acetyl-CoA.

In the N-terminal section; belongs to the N-acetylglucosamine-1-phosphate uridyltransferase family. The protein in the C-terminal section; belongs to the transferase hexapeptide repeat family. Homotrimer. Requires Mg(2+) as cofactor.

Its subcellular location is the cytoplasm. It carries out the reaction alpha-D-glucosamine 1-phosphate + acetyl-CoA = N-acetyl-alpha-D-glucosamine 1-phosphate + CoA + H(+). It catalyses the reaction N-acetyl-alpha-D-glucosamine 1-phosphate + UTP + H(+) = UDP-N-acetyl-alpha-D-glucosamine + diphosphate. The protein operates within nucleotide-sugar biosynthesis; UDP-N-acetyl-alpha-D-glucosamine biosynthesis; N-acetyl-alpha-D-glucosamine 1-phosphate from alpha-D-glucosamine 6-phosphate (route II): step 2/2. Its pathway is nucleotide-sugar biosynthesis; UDP-N-acetyl-alpha-D-glucosamine biosynthesis; UDP-N-acetyl-alpha-D-glucosamine from N-acetyl-alpha-D-glucosamine 1-phosphate: step 1/1. It functions in the pathway bacterial outer membrane biogenesis; LPS lipid A biosynthesis. Its function is as follows. Catalyzes the last two sequential reactions in the de novo biosynthetic pathway for UDP-N-acetylglucosamine (UDP-GlcNAc). The C-terminal domain catalyzes the transfer of acetyl group from acetyl coenzyme A to glucosamine-1-phosphate (GlcN-1-P) to produce N-acetylglucosamine-1-phosphate (GlcNAc-1-P), which is converted into UDP-GlcNAc by the transfer of uridine 5-monophosphate (from uridine 5-triphosphate), a reaction catalyzed by the N-terminal domain. The protein is Bifunctional protein GlmU of Lactobacillus gasseri (strain ATCC 33323 / DSM 20243 / BCRC 14619 / CIP 102991 / JCM 1131 / KCTC 3163 / NCIMB 11718 / NCTC 13722 / AM63).